A 441-amino-acid polypeptide reads, in one-letter code: EP1-like glycoprotein 3 (441 aa).

An N-terminal signal peptide occupies residues M1–A22. A Bulb-type lectin domain is found at Q29–D159. N-linked (GlcNAc...) asparagine glycosylation is found at N102, N258, and N269. The WD repeat unit spans residues G254–A296. The region spanning C356–P433 is the PAN domain. Intrachain disulfides connect C387–C409 and C391–C397.

In terms of processing, phosphorylated on tyrosine.

Its subcellular location is the secreted. The protein localises to the cell wall. Functionally, may be involved in a cell-to cell programmed cell death (PCD) signaling mechanism. The protein is EP1-like glycoprotein 3 of Arabidopsis thaliana (Mouse-ear cress).